Here is a 557-residue protein sequence, read N- to C-terminus: ETHYLENE INSENSITIVE 3-like 5 protein (557 aa).

Disordered stretches follow at residues 1 to 23 (MVEV…DLEE) and 61 to 96 (NLNS…RKKM). Residues 64–82 (SVISSPSSSTSASSSSSSS) show a composition bias toward low complexity. The stretch at 270–311 (ERVRRLARQSKCLQDKMMAKETDTWSRVLNQEEARLNRLKIS) forms a coiled coil.

The protein belongs to the EIN3 family.

It is found in the nucleus. Putative transcription factor that may be involved in the ethylene response pathway. The chain is ETHYLENE INSENSITIVE 3-like 5 protein (EIL5) from Arabidopsis thaliana (Mouse-ear cress).